A 61-amino-acid chain; its full sequence is Fasciculin-2 (61 aa).

Intrachain disulfides connect Cys3–Cys22, Cys17–Cys39, Cys41–Cys52, and Cys53–Cys59.

The protein belongs to the three-finger toxin family. Short-chain subfamily. Acn-esterase inhibitor sub-subfamily. Expressed by the venom gland.

It is found in the secreted. In terms of biological role, interferes with neuromuscular transmission by inhibiting the enzyme acetylcholinesterase (AChE) present at the neuromuscular junction. It selectively binds and inhibits with a 1:1 stoichiometry the mammalian and electric fish AChE at picomolar concentrations. It is highly specific for the peripheral site of AChE and blocks the entry of acetylcholine into the active site of the enzyme (through the Met-33 residue), thereby preventing its breakdown. It has been called fasciculin since after injection into mice it causes severe, generalized and long-lasting (5-7 hours) fasciculations. The sequence is that of Fasciculin-2 from Dendroaspis angusticeps (Eastern green mamba).